Reading from the N-terminus, the 696-residue chain is MTDLSKYRNIGIFAHVDAGKTTSTERILKLTGKIHKIGDTHDGSTTTDFMEQEAERGITIQSAATTCFWNDHRLNIIDTPGHVDFTIEVYRSLKVLDGGIGVFCGSGGVEPQSETNWRYADESHVSRLIFVNKLDRMGADFYKVVDQVQNVLGATPLVMTLPIGIEEDFVGVVDVLSQQAYVWDESGQPENYEVQEIPADMVDKAAEYREMLIETALEQDEDLMMAYLEEGEEPSVEDIKRCIRKGTRDLAFFPTYCGSAYKNKGMQLILDAVVDYLPSPTEVDPQPLTDPDTGEATGEVATVSADEPLKALAFKIMDDRFGALTFIRIYSGKMKKGDTVLNSATGKTERIGRMVEMHADERNEIDSAQAGDIIAVVGMKNVQTGHTLCDPKHECTLEPMIFPEPVISIAVKPKDKGGSEKMGIAIGKMVAEDPSFQVETDEESGETILKGMGELHLDIKVDILKRTYGVELEVGAPQVAYRETITQAIEDSYTHKKQSGGSGQFAKIDYRIKPGEVGSGFTFKSTVVGGNVPKEFWPAVEKGFAGMMETGVLAGFPTLDVEVELYDGGFHAVDSSAIAYEIAAKGAFRQSMPKAGAQLLEPIMKVDVFTPEDHVGDVIGDLNRRRGMIKDQQAGTTGVRIKGDVPLSEMFGYIGTLRTMTSGRGQFSMEFSHYSPCPNNVAEQVIADVKERNAKK.

The region spanning 5–281 (SKYRNIGIFA…AVVDYLPSPT (277 aa)) is the tr-type G domain. GTP contacts are provided by residues 14–21 (AHVDAGKT), 78–82 (DTPGH), and 132–135 (NKLD).

The protein belongs to the TRAFAC class translation factor GTPase superfamily. Classic translation factor GTPase family. EF-G/EF-2 subfamily.

Its subcellular location is the cytoplasm. Its function is as follows. Catalyzes the GTP-dependent ribosomal translocation step during translation elongation. During this step, the ribosome changes from the pre-translocational (PRE) to the post-translocational (POST) state as the newly formed A-site-bound peptidyl-tRNA and P-site-bound deacylated tRNA move to the P and E sites, respectively. Catalyzes the coordinated movement of the two tRNA molecules, the mRNA and conformational changes in the ribosome. The polypeptide is Elongation factor G 2 (Vibrio parahaemolyticus serotype O3:K6 (strain RIMD 2210633)).